We begin with the raw amino-acid sequence, 478 residues long: Zinc finger protein 410 (478 aa).

Residues 187–213 (NAKTSSNGENVHLGSGDGQSKDSGPLP) form a disordered region. 5 consecutive C2H2-type zinc fingers follow at residues 219–243 (LKCT…LKTH), 249–273 (FICP…MRTH), 279–303 (FMCH…RRIH), 309–333 (FLCE…LVVH), and 339–362 (HQCQ…RKHH). The Zn(2+) site is built by cysteine 221, cysteine 226, histidine 239, histidine 243, cysteine 251, cysteine 256, histidine 269, histidine 273, cysteine 281, cysteine 286, histidine 299, histidine 303, cysteine 311, cysteine 316, histidine 329, histidine 333, cysteine 341, cysteine 344, histidine 357, and histidine 361.

Interacts with CDKN2A/p14ARF. Sumoylated. Sumoylation increases its half-life, possibly by blocking ubiquitin-mediated degradation. Post-translationally, O-glycosylated. O-GlcNAcylation may occur in response to increasing glucose levels and affect transcription factor activity. As to expression, widely expressed.

The protein localises to the nucleus. It is found in the chromosome. Functionally, transcription factor that binds to the sequence motif 5'-CATCCCATAATA-3', and is specifically required to silence expression of fetal hemoglobin in adult erythroid cells. Prevents expression of fetal hemoglobin genes HBG1 and HBG2 through CHD4: acts as a direct transcriptional activator of CHD4, a central component of the NuRD complex that represses transcription of fetal hemoglobin genes HBG1 and HBG2 in erythroid cells. May also activate transcription of matrix-remodeling genes such as MMP1 during fibroblast senescence. May activate transcription of the gap junction gene GJC1, perhaps in response to increasing glucose. However, recent studies suggest that ZNF410 is dedicated to regulate expression of a single gene: CHD4. The sequence is that of Zinc finger protein 410 from Homo sapiens (Human).